The chain runs to 207 residues: Protein dct-5 (207 aa).

Residues 13–33 (LNFILSIMNSYLFVLIVSIGF) traverse the membrane as a helical segment.

The protein localises to the membrane. Its function is as follows. Acts downstream of daf-16/foxo to suppress tumors induced by disruption of gld-1. Potentially a direct target of daf-15/foxo. The sequence is that of Protein dct-5 (dct-5) from Caenorhabditis elegans.